A 241-amino-acid polypeptide reads, in one-letter code: tRNA pseudouridine synthase A (241 aa).

Asp-52 acts as the Nucleophile in catalysis. Residue Tyr-110 coordinates substrate.

Belongs to the tRNA pseudouridine synthase TruA family. As to quaternary structure, homodimer.

The catalysed reaction is uridine(38/39/40) in tRNA = pseudouridine(38/39/40) in tRNA. Functionally, formation of pseudouridine at positions 38, 39 and 40 in the anticodon stem and loop of transfer RNAs. This chain is tRNA pseudouridine synthase A, found in Aquifex aeolicus (strain VF5).